The sequence spans 476 residues: Oogenesin-2 (476 aa).

Residues 97 to 121 (RCKLREITLSHDLVVVWAGSHEVEG) form an LRR 1; degenerate repeat. Residues 176 to 200 (HLHCRKLKIYGLTKAAVIEMFKIVH) form an LRR 2; degenerate repeat. Residues 201–226 (AEYIEDLELSCLCLEYLDFLNPYLKQ) form an LRR 3; degenerate repeat. An LRR 4; degenerate repeat occupies 227 to 264 (MSNLLSLTLDEIIYTLNIDDYRNLNEEKVITVISHLPT). LRR repeat units lie at residues 265 to 285 (FHHL…LRCL), 286 to 317 (KKPL…FELR), 342 to 369 (RHTL…ALSQ), and 370 to 394 (CYQL…LLHH).

This sequence belongs to the PRAME family. In terms of tissue distribution, expressed in ovary, specifically in oocytes. Detected in follicles with two layers of granulosa cells, and are present in early as well as large antral follicles.

In Mus musculus (Mouse), this protein is Oogenesin-2.